We begin with the raw amino-acid sequence, 681 residues long: Chaperone protein htpG (681 aa).

Positions 1 to 326 (MQKGNIGVTT…SPDIPLNVSR (326 aa)) are a; substrate-binding. The segment at 327–545 (SYLQSDSNVK…YMRRMKEMAN (219 aa)) is b. The interval 546 to 681 (IQAGMSFYGE…NFVKRSIELI (136 aa)) is c. A disordered region spans residues 601 to 620 (DALKKKQEGKKDEDIPTAEK).

It belongs to the heat shock protein 90 family. In terms of assembly, homodimer.

It is found in the cytoplasm. In terms of biological role, molecular chaperone. Has ATPase activity. The chain is Chaperone protein htpG from Bacteroides fragilis (strain 638R).